Consider the following 625-residue polypeptide: Phosphomethylpyrimidine synthase (625 aa).

Substrate contacts are provided by residues Asn-231, Met-260, Tyr-289, His-325, 345–347, 386–389, and Glu-425; these read SRG and DGLR. His-429 serves as a coordination point for Zn(2+). Residue Tyr-452 coordinates substrate. A Zn(2+)-binding site is contributed by His-493. [4Fe-4S] cluster is bound by residues Cys-573, Cys-576, and Cys-581.

Belongs to the ThiC family. In terms of assembly, homodimer. It depends on [4Fe-4S] cluster as a cofactor.

The enzyme catalyses 5-amino-1-(5-phospho-beta-D-ribosyl)imidazole + S-adenosyl-L-methionine = 4-amino-2-methyl-5-(phosphooxymethyl)pyrimidine + CO + 5'-deoxyadenosine + formate + L-methionine + 3 H(+). It participates in cofactor biosynthesis; thiamine diphosphate biosynthesis. Catalyzes the synthesis of the hydroxymethylpyrimidine phosphate (HMP-P) moiety of thiamine from aminoimidazole ribotide (AIR) in a radical S-adenosyl-L-methionine (SAM)-dependent reaction. The polypeptide is Phosphomethylpyrimidine synthase (Acinetobacter baumannii (strain SDF)).